Here is a 236-residue protein sequence, read N- to C-terminus: Eukaryotic translation initiation factor 3 subunit J (236 aa).

Residues 1–84 (MADDWESAAD…RLEEEAEAQR (84 aa)) are disordered. A compositionally biased stretch (acidic residues) spans 28 to 46 (GEDEDEDIKDSWEDEEEKK). 2 stretches are compositionally biased toward basic and acidic residues: residues 47-58 (DEEKPTKTEAPA) and 68-77 (AKLEQQARLE).

This sequence belongs to the eIF-3 subunit J family. In terms of assembly, component of the eukaryotic translation initiation factor 3 (eIF-3) complex. The eIF-3 complex interacts with pix.

It localises to the cytoplasm. Functionally, component of the eukaryotic translation initiation factor 3 (eIF-3) complex, which is involved in protein synthesis of a specialized repertoire of mRNAs and, together with other initiation factors, stimulates binding of mRNA and methionyl-tRNAi to the 40S ribosome. The eIF-3 complex specifically targets and initiates translation of a subset of mRNAs involved in cell proliferation. The chain is Eukaryotic translation initiation factor 3 subunit J from Drosophila yakuba (Fruit fly).